Reading from the N-terminus, the 115-residue chain is Cell division protein FtsL (115 aa).

Residues 1–25 (MNTATRVIVAQNVRTRNRTFQITKQ) are Cytoplasmic-facing. Residues 26–46 (GVVIVALVIALLCSAFGVVYF) form a helical membrane-spanning segment. Residues 47 to 115 (KDLNRRLFIQ…ILVNADAMIE (69 aa)) are Periplasmic-facing.

This sequence belongs to the FtsL family. Part of a complex composed of FtsB, FtsL and FtsQ.

The protein localises to the cell inner membrane. Functionally, essential cell division protein. May link together the upstream cell division proteins, which are predominantly cytoplasmic, with the downstream cell division proteins, which are predominantly periplasmic. The chain is Cell division protein FtsL from Coxiella burnetii (strain RSA 493 / Nine Mile phase I).